Consider the following 118-residue polypeptide: Putative cytochrome P450 family member 4F30 (118 aa).

The tract at residues 1–64 (MVTPAGCLGG…GPLHILGTDG (64 aa)) is disordered. Positions 28–43 (RAGQTGQAVSGAQVSS) are enriched in polar residues.

In Homo sapiens (Human), this protein is Putative cytochrome P450 family member 4F30 (CYP4F30P).